The primary structure comprises 595 residues: Adenine deaminase 2 (595 aa).

This sequence belongs to the metallo-dependent hydrolases superfamily. Adenine deaminase family. It depends on Mn(2+) as a cofactor.

It catalyses the reaction adenine + H2O + H(+) = hypoxanthine + NH4(+). The chain is Adenine deaminase 2 from Rhizobium etli (strain ATCC 51251 / DSM 11541 / JCM 21823 / NBRC 15573 / CFN 42).